Reading from the N-terminus, the 461-residue chain is Phosphomethylpyrimidine synthase (461 aa).

Substrate-binding positions include N80, M109, Y138, H173, 193–195, 234–237, and E273; these read SRG and DGLR. H277 is a binding site for Zn(2+). Y300 provides a ligand contact to substrate. H341 is a binding site for Zn(2+). Positions 421, 424, and 429 each coordinate [4Fe-4S] cluster.

The protein belongs to the ThiC family. It depends on [4Fe-4S] cluster as a cofactor.

The enzyme catalyses 5-amino-1-(5-phospho-beta-D-ribosyl)imidazole + S-adenosyl-L-methionine = 4-amino-2-methyl-5-(phosphooxymethyl)pyrimidine + CO + 5'-deoxyadenosine + formate + L-methionine + 3 H(+). It participates in cofactor biosynthesis; thiamine diphosphate biosynthesis. Catalyzes the synthesis of the hydroxymethylpyrimidine phosphate (HMP-P) moiety of thiamine from aminoimidazole ribotide (AIR) in a radical S-adenosyl-L-methionine (SAM)-dependent reaction. The polypeptide is Phosphomethylpyrimidine synthase (Solibacter usitatus (strain Ellin6076)).